Reading from the N-terminus, the 192-residue chain is Ribosomal RNA small subunit methyltransferase G (192 aa).

S-adenosyl-L-methionine-binding positions include Gly-63, Leu-68, 112–113 (IE), and Arg-125.

This sequence belongs to the methyltransferase superfamily. RNA methyltransferase RsmG family.

Its subcellular location is the cytoplasm. The enzyme catalyses guanosine(527) in 16S rRNA + S-adenosyl-L-methionine = N(7)-methylguanosine(527) in 16S rRNA + S-adenosyl-L-homocysteine. Functionally, specifically methylates the N7 position of guanine in position 527 of 16S rRNA. This is Ribosomal RNA small subunit methyltransferase G from Rickettsia rickettsii (strain Iowa).